Consider the following 553-residue polypeptide: ATP synthase F(1) complex subunit alpha, mitochondrial (553 aa).

The N-terminal 43 residues, 1 to 43 (MLSVRIAAAVARALPRRAGLVSKNALGSSFVGTRNLHASNTRL), are a transit peptide targeting the mitochondrion. Serine 53 and serine 65 each carry phosphoserine. Serine 76 is modified (phosphoserine; alternate). A glycan (O-linked (GlcNAc) serine; alternate) is linked at serine 76. Serine 106 carries the post-translational modification Phosphoserine. N6-acetyllysine is present on residues lysine 123, lysine 126, and lysine 132. Position 134 is a phosphothreonine (threonine 134). Lysine 161 carries the post-translational modification N6-acetyllysine; alternate. Residue lysine 161 is modified to N6-succinyllysine; alternate. Residue serine 166 is modified to Phosphoserine. Lysine 167 carries the N6-acetyllysine; alternate modification. Lysine 167 bears the N6-succinyllysine; alternate mark. A Phosphoserine modification is found at serine 184. Arginine 204 bears the Omega-N-methylarginine mark. Residues glutamine 215, glycine 217, lysine 218, threonine 219, and serine 220 each coordinate ATP. Threonine 219 lines the Mg(2+) pocket. 2 positions are modified to N6-acetyllysine; alternate: lysine 230 and lysine 239. N6-succinyllysine; alternate is present on residues lysine 230 and lysine 239. Position 240 is an N6-acetyllysine (lysine 240). An N6-acetyllysine; alternate mark is found at lysine 261 and lysine 305. An N6-succinyllysine; alternate mark is found at lysine 261 and lysine 305. Aspartate 312 contacts Mg(2+). Lysine 427 carries the N6-acetyllysine; alternate modification. At lysine 427 the chain carries N6-succinyllysine; alternate. N6-acetyllysine is present on lysine 434. The ATP site is built by glutamine 473 and glutamine 475. An N6-acetyllysine; alternate mark is found at lysine 498, lysine 506, lysine 531, and lysine 539. N6-succinyllysine; alternate occurs at positions 498, 506, 531, and 539. N6-acetyllysine is present on lysine 541.

The protein belongs to the ATPase alpha/beta chains family. Homotrimer. Component of the ATP synthase complex composed at least of ATP5F1A/subunit alpha, ATP5F1B/subunit beta, ATP5MC1/subunit c (homooctomer), MT-ATP6/subunit a, MT-ATP8/subunit 8, ATP5ME/subunit e, ATP5MF/subunit f, ATP5MG/subunit g, ATP5MK/subunit k, ATP5MJ/subunit j, ATP5F1C/subunit gamma, ATP5F1D/subunit delta, ATP5F1E/subunit epsilon, ATP5PF/subunit F6, ATP5PB/subunit b, ATP5PD/subunit d, ATP5PO/subunit OSCP. ATP synthase complex consists of a soluble F(1) head domain (subunits alpha(3) and beta(3)) - the catalytic core - and a membrane F(0) domain - the membrane proton channel (subunits c, a, 8, e, f, g, k and j). These two domains are linked by a central stalk (subunits gamma, delta, and epsilon) rotating inside the F1 region and a stationary peripheral stalk (subunits F6, b, d, and OSCP). Interacts with ATPAF2. Interacts with HRG; the interaction occurs on the surface of T-cells and alters the cell morphology when associated with concanavalin (in vitro). Interacts with PLG (angiostatin peptide); the interaction inhibits most of the angiogenic properties of angiostatin. Interacts with BLOC1S1. Interacts with BCL2L1 isoform BCL-X(L); the interaction mediates the association of BCL2L1 isoform BCL-X(L) with the mitochondrial membrane F(1)F(0) ATP synthase and enhances neurons metabolic efficiency. Interacts with CLN5 and PPT1. Interacts with S100A1; this interaction increases F1-ATPase activity. Interacts with ABCB7; this interaction allows the regulation of cellular iron homeostasis and cellular reactive oxygen species (ROS) levels in cardiomyocytes. Acetylated on lysine residues. BLOC1S1 is required for acetylation. Expressed in flagella of epididymal sperm.

It localises to the mitochondrion. The protein resides in the mitochondrion inner membrane. Its subcellular location is the cell membrane. In terms of biological role, subunit alpha, of the mitochondrial membrane ATP synthase complex (F(1)F(0) ATP synthase or Complex V) that produces ATP from ADP in the presence of a proton gradient across the membrane which is generated by electron transport complexes of the respiratory chain. ATP synthase complex consist of a soluble F(1) head domain - the catalytic core - and a membrane F(1) domain - the membrane proton channel. These two domains are linked by a central stalk rotating inside the F(1) region and a stationary peripheral stalk. During catalysis, ATP synthesis in the catalytic domain of F(1) is coupled via a rotary mechanism of the central stalk subunits to proton translocation. In vivo, can only synthesize ATP although its ATP hydrolase activity can be activated artificially in vitro. With the catalytic subunit beta (ATP5F1B), forms the catalytic core in the F(1) domain. Subunit alpha does not bear the catalytic high-affinity ATP-binding sites. This is ATP synthase F(1) complex subunit alpha, mitochondrial from Rattus norvegicus (Rat).